The chain runs to 373 residues: tRNA-specific 2-thiouridylase MnmA (373 aa).

Residues 12–19 (GMSGGVDS) and M38 contribute to the ATP site. The interaction with target base in tRNA stretch occupies residues 98-100 (NPD). Catalysis depends on C103, which acts as the Nucleophile. C103 and C200 are joined by a disulfide. G127 contacts ATP. The segment at 150–152 (KDQ) is interaction with tRNA. Residue C200 is the Cysteine persulfide intermediate of the active site. The interaction with tRNA stretch occupies residues 312-313 (RY).

It belongs to the MnmA/TRMU family.

Its subcellular location is the cytoplasm. The enzyme catalyses S-sulfanyl-L-cysteinyl-[protein] + uridine(34) in tRNA + AH2 + ATP = 2-thiouridine(34) in tRNA + L-cysteinyl-[protein] + A + AMP + diphosphate + H(+). Catalyzes the 2-thiolation of uridine at the wobble position (U34) of tRNA, leading to the formation of s(2)U34. The protein is tRNA-specific 2-thiouridylase MnmA of Streptococcus pneumoniae (strain P1031).